A 298-amino-acid polypeptide reads, in one-letter code: NADH-ubiquinone oxidoreductase chain 1 (298 aa).

7 helical membrane-spanning segments follow: residues 2 to 22, 71 to 91, 99 to 119, 136 to 156, 171 to 191, 231 to 251, and 272 to 292; these read IYFI…LTLL, LVAP…VPFI, LSFL…MVAG, AQTI…LMLF, VGWP…TILA, ILFM…LMFC, and LMHL…CFYW.

This sequence belongs to the complex I subunit 1 family.

Its subcellular location is the mitochondrion inner membrane. It catalyses the reaction a ubiquinone + NADH + 5 H(+)(in) = a ubiquinol + NAD(+) + 4 H(+)(out). Functionally, core subunit of the mitochondrial membrane respiratory chain NADH dehydrogenase (Complex I) that is believed to belong to the minimal assembly required for catalysis. Complex I functions in the transfer of electrons from NADH to the respiratory chain. The immediate electron acceptor for the enzyme is believed to be ubiquinone. The chain is NADH-ubiquinone oxidoreductase chain 1 (ND1) from Artemia franciscana (Brine shrimp).